A 120-amino-acid chain; its full sequence is Large ribosomal subunit protein bL19 (120 aa).

It belongs to the bacterial ribosomal protein bL19 family.

In terms of biological role, this protein is located at the 30S-50S ribosomal subunit interface and may play a role in the structure and function of the aminoacyl-tRNA binding site. The polypeptide is Large ribosomal subunit protein bL19 (Renibacterium salmoninarum (strain ATCC 33209 / DSM 20767 / JCM 11484 / NBRC 15589 / NCIMB 2235)).